The sequence spans 344 residues: Acetylpolyamine amidohydrolase 2 (344 aa).

The active-site Proton donor/acceptor is the histidine 159. Zn(2+)-binding residues include aspartate 195, histidine 197, and aspartate 284.

Belongs to the histone deacetylase family. Homodimer. Zn(2+) serves as cofactor.

It carries out the reaction N-acetylputrescine + H2O = putrescine + acetate. The catalysed reaction is N-acetylcadaverine + H2O = cadaverine + acetate. The protein operates within amine and polyamine metabolism. Functionally, catalyzes the deacetylation of acetylated polyamines such as N-acetylputrescine and N-acetylcadaverine. Plays an important role in the metabolism of acetylated polyamines in P.aeruginosa. Is involved in the degradation pathways of N-acetylputrescine and N-acetylcadaverine, that allow P.aeruginosa to utilize these acetylpolyamines as a carbon source under glucose starvation. Shows nearly no activity against N(1)-acetylspermine and N(1)-acetylspermidine. Can also hydrolyze artificial trifluoroacetylated lysine-derivative, and to a lesser extent, acetylated lysine-derivative. This Pseudomonas aeruginosa (strain ATCC 15692 / DSM 22644 / CIP 104116 / JCM 14847 / LMG 12228 / 1C / PRS 101 / PAO1) protein is Acetylpolyamine amidohydrolase 2.